Reading from the N-terminus, the 331-residue chain is Trans-O-hydroxybenzylidenepyruvate hydratase-aldolase (331 aa).

This sequence belongs to the DapA family.

The catalysed reaction is (3E)-4-(2-hydroxyphenyl)-2-oxobut-3-enoate + H2O = salicylaldehyde + pyruvate. It participates in aromatic compound metabolism; naphthalene degradation. Involved in the naphthalene upper catabolic pathway. Catalyzes the transformation of trans-O-hydroxybenzylidenepyruvate (THBPA) to salicylaldehyde and pyruvate. The reaction is reversible. Can also use substrate which carry trans-alpha,beta-unsaturated keto acid side chain and adjacent hydroxyl group such as trans-4-(3-hydroxy-2-thianaphthenyl)-2-oxo-but-3-enoate, trans-4-(3-hydroxy-2-benzofuranyl)-2-oxobut-3-enoate, and trans-4-(3-hydroxy-2-thienyl)-2-oxobut-3-enoate. The polypeptide is Trans-O-hydroxybenzylidenepyruvate hydratase-aldolase (nahE) (Pseudomonas putida (Arthrobacter siderocapsulatus)).